The chain runs to 21 residues: Fibrinogen beta chain (21 aa).

A Pyrrolidone carboxylic acid modification is found at Q1. Y6 carries the sulfotyrosine modification.

As to quaternary structure, heterohexamer; disulfide linked. Contains 2 sets of 3 non-identical chains (alpha, beta and gamma). The 2 heterotrimers are in head to head conformation with the N-termini in a small central domain. Conversion of fibrinogen to fibrin is triggered by thrombin, which cleaves fibrinopeptides A and B from alpha and beta chains, and thus exposes the N-terminal polymerization sites responsible for the formation of the soft clot.

The protein resides in the secreted. Cleaved by the protease thrombin to yield monomers which, together with fibrinogen alpha (FGA) and fibrinogen gamma (FGG), polymerize to form an insoluble fibrin matrix. Fibrin has a major function in hemostasis as one of the primary components of blood clots. In addition, functions during the early stages of wound repair to stabilize the lesion and guide cell migration during re-epithelialization. Was originally thought to be essential for platelet aggregation, based on in vitro studies using anticoagulated blood. However subsequent studies have shown that it is not absolutely required for thrombus formation in vivo. Enhances expression of SELP in activated platelets. Maternal fibrinogen is essential for successful pregnancy. Fibrin deposition is also associated with infection, where it protects against IFNG-mediated hemorrhage. May also facilitate the antibacterial immune response via both innate and T-cell mediated pathways. The chain is Fibrinogen beta chain (FGB) from Rangifer tarandus (Reindeer).